The following is a 360-amino-acid chain: Histidinol-phosphate aminotransferase (360 aa).

K218 carries the post-translational modification N6-(pyridoxal phosphate)lysine.

Belongs to the class-II pyridoxal-phosphate-dependent aminotransferase family. Histidinol-phosphate aminotransferase subfamily. In terms of assembly, homodimer. It depends on pyridoxal 5'-phosphate as a cofactor.

It carries out the reaction L-histidinol phosphate + 2-oxoglutarate = 3-(imidazol-4-yl)-2-oxopropyl phosphate + L-glutamate. It participates in amino-acid biosynthesis; L-histidine biosynthesis; L-histidine from 5-phospho-alpha-D-ribose 1-diphosphate: step 7/9. This chain is Histidinol-phosphate aminotransferase, found in Pelagibacter ubique (strain HTCC1062).